Reading from the N-terminus, the 128-residue chain is Glycine cleavage system H protein (128 aa).

Residues 25–107 enclose the Lipoyl-binding domain; it reads TFKVGITDHA…YEAGWLFTVR (83 aa). K66 carries the post-translational modification N6-lipoyllysine.

Belongs to the GcvH family. As to quaternary structure, the glycine cleavage system is composed of four proteins: P, T, L and H. The cofactor is (R)-lipoate.

Its function is as follows. The glycine cleavage system catalyzes the degradation of glycine. The H protein shuttles the methylamine group of glycine from the P protein to the T protein. This Kocuria rhizophila (strain ATCC 9341 / DSM 348 / NBRC 103217 / DC2201) protein is Glycine cleavage system H protein.